A 471-amino-acid polypeptide reads, in one-letter code: P2X purinoceptor 2 (471 aa).

The Cytoplasmic portion of the chain corresponds to 1-42 (MAAAQPKYPAGATARRLARGCWSALWDYETPKVIVVRNRRLG). Disulfide bonds link C21-C439, C125-C176, C136-C159, C142-C170, C226-C236, and C270-C279. Residues 43–63 (VLYRAVQLLILLYFVWYVFIV) form a helical membrane-spanning segment. Topologically, residues 64 to 337 (QKSYQESETG…IVHGQAGKFS (274 aa)) are extracellular. Residues K81 and K83 each contribute to the ATP site. The N-linked (GlcNAc...) asparagine glycan is linked to N133. N194 carries an N-linked (GlcNAc...) asparagine glycan. T196 lines the ATP pocket. The ATP site is built by S296, N300, and R302. A glycan (N-linked (GlcNAc...) asparagine) is linked at N310. K319 lines the ATP pocket. Positions 320-333 (AYGIRIDVIVHGQA) are pore-forming motif. Residues 338 to 358 (LIPTIINLATALTSVGVGSFL) form a helical membrane-spanning segment. The Cytoplasmic portion of the chain corresponds to 359–471 (CDWILLTFMN…PTDPKGLAQL (113 aa)). Residues 400–471 (GQAPPEPGHR…PTDPKGLAQL (72 aa)) form a disordered region.

This sequence belongs to the P2X receptor family. Homotrimer and heterotrimer; functional P2XRs are organized as homomeric and heteromeric trimers. Homotrimer. Forms heterotrimer with P2RX1. Forms heterotrimer with P2RX6. Forms heterotrimer with P2RX3. In terms of tissue distribution, expressed in both the central and peripheral nervous system, as well as in the pituitary gland.

It localises to the cell membrane. It catalyses the reaction Ca(2+)(in) = Ca(2+)(out). The catalysed reaction is K(+)(in) = K(+)(out). The enzyme catalyses Na(+)(in) = Na(+)(out). With respect to regulation, fast activation by external ATP. Exhibits slow desensitization during prolonged ATP activation. Not sensitive to the ATP agonist:alpha/beta-methylene-ATP. Its function is as follows. ATP-gated nonselective transmembrane cation channel permeable to potassium, sodium and calcium. Activation by extracellular ATP induces a variety of cellular responses, such as excitatory postsynaptic responses in sensory neurons, neuromuscular junctions (NMJ) formation, hearing, perception of taste and peristalsis. In the inner ear, regulates sound transduction and auditory neurotransmission, outer hair cell electromotility, inner ear gap junctions, and K(+) recycling. Mediates synaptic transmission between neurons and from neurons to smooth muscle. This chain is P2X purinoceptor 2, found in Homo sapiens (Human).